We begin with the raw amino-acid sequence, 180 residues long: NAD(P)H-quinone oxidoreductase subunit I, chloroplastic (180 aa).

4Fe-4S ferredoxin-type domains are found at residues 55 to 84 and 95 to 124; these read GRIH…VDWR and LNYS…MTEE. Positions 64, 67, 70, 74, 104, 107, 110, and 114 each coordinate [4Fe-4S] cluster.

This sequence belongs to the complex I 23 kDa subunit family. NDH is composed of at least 16 different subunits, 5 of which are encoded in the nucleus. [4Fe-4S] cluster is required as a cofactor.

The protein resides in the plastid. The protein localises to the chloroplast thylakoid membrane. The enzyme catalyses a plastoquinone + NADH + (n+1) H(+)(in) = a plastoquinol + NAD(+) + n H(+)(out). The catalysed reaction is a plastoquinone + NADPH + (n+1) H(+)(in) = a plastoquinol + NADP(+) + n H(+)(out). In terms of biological role, NDH shuttles electrons from NAD(P)H:plastoquinone, via FMN and iron-sulfur (Fe-S) centers, to quinones in the photosynthetic chain and possibly in a chloroplast respiratory chain. The immediate electron acceptor for the enzyme in this species is believed to be plastoquinone. Couples the redox reaction to proton translocation, and thus conserves the redox energy in a proton gradient. The sequence is that of NAD(P)H-quinone oxidoreductase subunit I, chloroplastic from Illicium oligandrum (Star anise).